Consider the following 142-residue polypeptide: HTH-type transcriptional regulator MntR (142 aa).

One can recognise an HTH dtxR-type domain in the interval 1-63 (MTTPSMEDYI…YEKYRGLVLT (63 aa)). Cd(2+)-binding residues include D8, E11, H77, E99, E102, and H103. Residues D8, E11, H77, E99, E102, and H103 each contribute to the Mn(2+) site.

The protein belongs to the DtxR/MntR family. In terms of assembly, homodimer.

The protein localises to the cytoplasm. With respect to regulation, DNA binding is strongly activated by Mn(2+) and Cd(2+), but it is poorly activated by non-cognate metal cations, including Co(2+), Fe(2+), Ni(2+), Ca(2+) and Zn(2+). In the strict absence of divalent transition metal ions, MntR has a low affinity for DNA. Its function is as follows. Central regulator of manganese homeostasis that regulates the expression of both manganese uptake and efflux systems. In the presence of high levels of manganese, it mediates repression of the manganese uptake systems MntH and MntABCD and activation of the efflux systems MneP and MneS. Binds with high affinity to the regulatory regions of its target genes. The manganese concentration required for activation of efflux is higher than that for repression of uptake. The chain is HTH-type transcriptional regulator MntR from Bacillus subtilis (strain 168).